The following is a 582-amino-acid chain: MISLITYFGVVHYNFYRRHVSLRSLYIILISMWTFSLAIAIPLGLYEAASNSQGPIKCDLSYCGKVVEWITFSIACISLAITASLTGFAVISLHWYNYKSKTNGVDVPKVTTRARIRLTWTFFALIVICLIELLPFGLVIGNDKSSLQGCDSFYNANELLVQSIISSVETLVGSLVFLTDPLINIFFDKNISKMVKLQLTLGKWFIALYRFLFQMTNIFENCSTHYSFEKNLQKCVNASNPCQLLQKMNTAHSLMIWMGFYIPSAMCFLAVLVDTYCLLVTISILKSLKKQSRKQYIFVVVRLSAAILIALCIIIIQSTYFIDIPFRDTFAFFAVLFIIYDFSILSLLGSFTGVAMMTYFGVMRPLVYRDKFTLKTIYIIAFAIVLFSVCVAIPFGLFQAADEIDGPIKCDSESCELIVKWLLFCIACLILMGCTGTLLFVTVSLHWHSYKSKKMGNVSSSAFNHGKSRLTWTTTILVILCCVELIPTGLLAAFGKSESISDDCYDFYNANSLIFPAIVSSLETFLGSITFLLDPIINFSFDKRISKVFSSQMKFLRSKVFCASSSSLSRNDKIIKDQSQIE.

The next 4 membrane-spanning stretches (helical) occupy residues 25-45 (LYII…PLGL), 70-90 (ITFS…GFAV), 120-140 (WTFF…GLVI), and 159-179 (LLVQ…VFLT). Asparagine 190 carries N-linked (GlcNAc...) asparagine glycosylation. The helical transmembrane segment at 199-218 (LTLGKWFIALYRFLFQMTNI) threads the bilayer. Residues asparagine 221 and asparagine 237 are each glycosylated (N-linked (GlcNAc...) asparagine). The next 5 membrane-spanning stretches (helical) occupy residues 253-273 (SLMI…AVLV), 296-316 (YIFV…IIII), 329-349 (TFAF…SLLG), 377-397 (IYII…PFGL), and 421-441 (WLLF…LLFV). The N-linked (GlcNAc...) asparagine glycan is linked to asparagine 457. The next 2 membrane-spanning stretches (helical) occupy residues 475–495 (TILV…AAFG) and 513–533 (LIFP…TFLL). The N-linked (GlcNAc...) asparagine glycan is linked to asparagine 538.

Belongs to the G-protein coupled receptor 1 family. B0244 subfamily.

It localises to the cell membrane. The sequence is that of Putative G-protein coupled receptor B0244.10 from Caenorhabditis elegans.